We begin with the raw amino-acid sequence, 402 residues long: UPF0261 protein BP1203 (402 aa).

Belongs to the UPF0261 family.

The chain is UPF0261 protein BP1203 from Bordetella pertussis (strain Tohama I / ATCC BAA-589 / NCTC 13251).